A 189-amino-acid chain; its full sequence is Probable nicotinate-nucleotide adenylyltransferase (189 aa).

It belongs to the NadD family.

It catalyses the reaction nicotinate beta-D-ribonucleotide + ATP + H(+) = deamido-NAD(+) + diphosphate. It participates in cofactor biosynthesis; NAD(+) biosynthesis; deamido-NAD(+) from nicotinate D-ribonucleotide: step 1/1. Catalyzes the reversible adenylation of nicotinate mononucleotide (NaMN) to nicotinic acid adenine dinucleotide (NaAD). This is Probable nicotinate-nucleotide adenylyltransferase from Bacillus cereus (strain G9842).